We begin with the raw amino-acid sequence, 337 residues long: Cysteine synthase 3 (337 aa).

The residue at position 47 (K47) is an N6-(pyridoxal phosphate)lysine. Pyridoxal 5'-phosphate is bound by residues N78, 182–186, and S270; that span reads GSSGT.

This sequence belongs to the cysteine synthase/cystathionine beta-synthase family. As to quaternary structure, homodimer. Requires pyridoxal 5'-phosphate as cofactor.

It carries out the reaction O-acetyl-L-serine + hydrogen sulfide = L-cysteine + acetate. Its pathway is amino-acid biosynthesis; L-cysteine biosynthesis; L-cysteine from L-serine: step 2/2. Primarily catalyzes the formation of cysteine and acetate from O-acetylserine and hydrogen sulfide. Can also catalyze the formation of cysteine and acetate from S-sulfocysteine and hydrogen sulfide and the formation of cyanoalanine and hydrogen sulfide from either S-sulfocysteine or O-acetylserine and hydrogen cyanide. The polypeptide is Cysteine synthase 3 (Caenorhabditis elegans).